A 157-amino-acid chain; its full sequence is Transcriptional repressor NrdR (157 aa).

A zinc finger spans residues 3 to 34; the sequence is CPFCRHPDSRVVDSRTSDDGLSIRRRRQCPEC. Positions 46-136 constitute an ATP-cone domain; sequence LSVIKRNGVV…VYQGFDSLDD (91 aa).

It belongs to the NrdR family. It depends on Zn(2+) as a cofactor.

Negatively regulates transcription of bacterial ribonucleotide reductase nrd genes and operons by binding to NrdR-boxes. In Clavibacter michiganensis subsp. michiganensis (strain NCPPB 382), this protein is Transcriptional repressor NrdR.